A 223-amino-acid polypeptide reads, in one-letter code: MNFNQLIDHTYLKPEATKKNIDNLIMQGFEHNFFSVCVNSIWVKYVKEKIKKLNSNLKITAVVGFPLGASITQAKAHEAKLAVEHGADEIDMVIAVGFLKQKDYEYVLNDIKSVKKAIGNKVLKIIIETALLTKEEIKKATEIVLKSGAEFIKTSTGFSYRGASLDDVVTMKSVIKDQKLEIKAAGGISTLEDMQKMHEAGATRFGLSKSVEILKNQKVETKY.

Residue aspartate 91 is the Proton donor/acceptor of the active site. The active-site Schiff-base intermediate with acetaldehyde is lysine 153. The active-site Proton donor/acceptor is lysine 183.

This sequence belongs to the DeoC/FbaB aldolase family. DeoC type 1 subfamily.

Its subcellular location is the cytoplasm. It carries out the reaction 2-deoxy-D-ribose 5-phosphate = D-glyceraldehyde 3-phosphate + acetaldehyde. It participates in carbohydrate degradation; 2-deoxy-D-ribose 1-phosphate degradation; D-glyceraldehyde 3-phosphate and acetaldehyde from 2-deoxy-alpha-D-ribose 1-phosphate: step 2/2. Its function is as follows. Catalyzes a reversible aldol reaction between acetaldehyde and D-glyceraldehyde 3-phosphate to generate 2-deoxy-D-ribose 5-phosphate. This is Deoxyribose-phosphate aldolase from Mycoplasmopsis synoviae (strain 53) (Mycoplasma synoviae).